The sequence spans 4870 residues: Malformin synthetase mlfA (4870 aa).

Residues 106 to 497 (ERRAANRPHS…CGRADTQVKL (392 aa)) form an adenylation 1 region. The 77-residue stretch at 635–711 (LGLSQLEQEI…EASSLAEVQE (77 aa)) folds into the Carrier 1 domain. Ser-672 is modified (O-(pantetheine 4'-phosphoryl)serine). Residues 749-1133 (EDVFPCTTMQ…ALNTLTLLQA (385 aa)) form a condensation 1 region. Positions 1161–1550 (DRWVTRQPES…GRKDTQVKLR (390 aa)) are adenylation 2. The Carrier 2 domain maps to 1688-1765 (TASSKLELTL…QLAAILGEAT (78 aa)). An O-(pantetheine 4'-phosphoryl)serine modification is found at Ser-1725. Disordered regions lie at residues 1764–1794 (ATGQ…NDGV) and 1829–1859 (GSSS…VSPV). Low complexity-rich tracts occupy residues 1769-1792 (ESSA…STND) and 1830-1846 (SSSC…SSSS). Residues 1898-2313 (EDIYPATALQ…GVSYRDKQTL (416 aa)) are condensation 2. Residues 2336 to 2728 (VRTPHAPAVF…IGRRDGQLKL (393 aa)) form an adenylation 3 region. One can recognise a Carrier 3 domain in the interval 2864 to 2940 (RPATAQEREM…QLMRHLSANG (77 aa)). At Ser-2901 the chain carries O-(pantetheine 4'-phosphoryl)serine. Condensation stretches follow at residues 2957-3422 (WVPL…TYDQ) and 3443-3862 (DIYP…EQLV). Residues 3887 to 4277 (HSSREAACAW…VGRKDNQIKF (391 aa)) form an adenylation 4 region. The region spanning 4411–4487 (MPFTAAECKM…DLAYRTANLV (77 aa)) is the Carrier 4 domain. O-(pantetheine 4'-phosphoryl)serine is present on Ser-4448. Positions 4524–4837 (EVLPTTSFQR…LQTIVQHQNN (314 aa)) are condensation 5.

This sequence belongs to the NRP synthetase family.

It participates in secondary metabolite biosynthesis. In terms of biological role, nonribosomal peptide synthetase; part of the gene cluster that mediates the biosynthesis of malformins, cyclic pentapeptides with a disulfide bond between 2 consecutive cysteins, that show potential anti-tumor as well as antimalarial and antitrypanosomal properties. The nonribosomal peptide synthetase mlfA is responsible of the formation of the cyclic pentapeptide. The malformin biosynthesis clusters in malformin-producing fungi also contain enzymes involved in the formation of the disulfide bond between the two consecutive cysteins within malformins, in addition to additional tailoring enzymes such as methyltransferases or oxidoreductases. They are also composed of up to 4 major facilitator superfamily transporters, and transcription factors probably involved in the regulation of the expression of those clusters. In Aspergillus niger (strain ATCC 1015 / CBS 113.46 / FGSC A1144 / LSHB Ac4 / NCTC 3858a / NRRL 328 / USDA 3528.7), this protein is Malformin synthetase mlfA.